We begin with the raw amino-acid sequence, 221 residues long: ATP-dependent dethiobiotin synthetase BioD (221 aa).

11–16 (DIGKTL) provides a ligand contact to ATP. Mg(2+) is bound at residue Thr15. Lys35 is a catalytic residue. Thr39 contacts substrate. Residues Asp44 and 103–106 (EGAG) contribute to the ATP site. 2 residues coordinate Mg(2+): Asp44 and Glu103.

The protein belongs to the dethiobiotin synthetase family. In terms of assembly, homodimer. Mg(2+) serves as cofactor.

It localises to the cytoplasm. It carries out the reaction (7R,8S)-7,8-diammoniononanoate + CO2 + ATP = (4R,5S)-dethiobiotin + ADP + phosphate + 3 H(+). The protein operates within cofactor biosynthesis; biotin biosynthesis; biotin from 7,8-diaminononanoate: step 1/2. Its function is as follows. Catalyzes a mechanistically unusual reaction, the ATP-dependent insertion of CO2 between the N7 and N8 nitrogen atoms of 7,8-diaminopelargonic acid (DAPA, also called 7,8-diammoniononanoate) to form a ureido ring. In Leptospira borgpetersenii serovar Hardjo-bovis (strain L550), this protein is ATP-dependent dethiobiotin synthetase BioD.